We begin with the raw amino-acid sequence, 873 residues long: Alanine--tRNA ligase (873 aa).

His563, His567, Cys665, and His669 together coordinate Zn(2+).

Belongs to the class-II aminoacyl-tRNA synthetase family. Zn(2+) serves as cofactor.

It localises to the cytoplasm. It carries out the reaction tRNA(Ala) + L-alanine + ATP = L-alanyl-tRNA(Ala) + AMP + diphosphate. Catalyzes the attachment of alanine to tRNA(Ala) in a two-step reaction: alanine is first activated by ATP to form Ala-AMP and then transferred to the acceptor end of tRNA(Ala). Also edits incorrectly charged Ser-tRNA(Ala) and Gly-tRNA(Ala) via its editing domain. This chain is Alanine--tRNA ligase, found in Parabacteroides distasonis (strain ATCC 8503 / DSM 20701 / CIP 104284 / JCM 5825 / NCTC 11152).